Reading from the N-terminus, the 343-residue chain is Vancomycin/teicoplanin A-type resistance protein VanA (343 aa).

ATP contacts are provided by residues lysine 133, 169 to 171 (FVK), 177 to 178 (SS), 207 to 214 (EQAVSGCE), and phenylalanine 241. One can recognise an ATP-grasp domain in the interval 137 to 338 (YIVAKNAGIA…LPELIDRLIV (202 aa)). Position 244 (histidine 244) interacts with substrate. Position 304–305 (304–305 (NE)) interacts with ATP. The Mg(2+) site is built by glutamate 305 and asparagine 307.

It belongs to the D-alanine--D-alanine ligase family. Mg(2+) is required as a cofactor. The cofactor is Mn(2+).

It localises to the cell membrane. It carries out the reaction (R)-lactate + D-alanine + ATP = D-alanyl-(R)-lactate + ADP + phosphate. Required for high-level resistance to glycopeptide antibiotics. D-Ala--D-Ala ligase of altered specificity which catalyzes ester bond formation between D-Ala and various D-hydroxy acids; produces a peptidoglycan which does not terminate in D-alanine but in D-lactate, thus preventing vancomycin or teicoplanin binding. This Enterococcus faecium (Streptococcus faecium) protein is Vancomycin/teicoplanin A-type resistance protein VanA (vanA).